Here is an 84-residue protein sequence, read N- to C-terminus: Large ribosomal subunit protein bL27 (84 aa).

The tract at residues 1 to 21 (MAHKKGGGSTKNGRDSNPKYL) is disordered.

It belongs to the bacterial ribosomal protein bL27 family.

The polypeptide is Large ribosomal subunit protein bL27 (Chlorobaculum parvum (strain DSM 263 / NCIMB 8327) (Chlorobium vibrioforme subsp. thiosulfatophilum)).